The primary structure comprises 152 residues: Small ribosomal subunit protein bS6 (152 aa).

Positions His-96 to Val-152 are disordered.

Belongs to the bacterial ribosomal protein bS6 family.

Its function is as follows. Binds together with bS18 to 16S ribosomal RNA. The sequence is that of Small ribosomal subunit protein bS6 from Xanthobacter autotrophicus (strain ATCC BAA-1158 / Py2).